Reading from the N-terminus, the 348-residue chain is D-erythrose-4-phosphate dehydrogenase (348 aa).

NAD(+) is bound at residue 12-13; sequence RI. Residues 154 to 156, Arg-200, 213 to 214, and Arg-236 each bind substrate; these read SCT and TR. Cys-155 serves as the catalytic Nucleophile. Position 318 (Asn-318) interacts with NAD(+).

It belongs to the glyceraldehyde-3-phosphate dehydrogenase family. Epd subfamily. As to quaternary structure, homotetramer.

It is found in the cytoplasm. It carries out the reaction D-erythrose 4-phosphate + NAD(+) + H2O = 4-phospho-D-erythronate + NADH + 2 H(+). The protein operates within cofactor biosynthesis; pyridoxine 5'-phosphate biosynthesis; pyridoxine 5'-phosphate from D-erythrose 4-phosphate: step 1/5. Its function is as follows. Catalyzes the NAD-dependent conversion of D-erythrose 4-phosphate to 4-phosphoerythronate. The protein is D-erythrose-4-phosphate dehydrogenase of Erwinia tasmaniensis (strain DSM 17950 / CFBP 7177 / CIP 109463 / NCPPB 4357 / Et1/99).